Reading from the N-terminus, the 291-residue chain is MAEFTVPEVDYTRYSNYQLVVIPLIILAVALLIIASWYVLTGSPVTQGIAFTGGTEITVETDGATTTQIVEAFSVEPESVQAVPTANTYIVTFQSNGNSGVAVTDLTRQAEQAGFEVQSAYEVSPSFGATTQTLALGGVGVAFLGMSVLVFLMFRVFVPSIAVVVSAFSDIAISVALMNVLGIELSLGTVAALLMIIGYSVDSDILLNNHVLRRSGDFYESTYRAMRTGVTMTLTSIIAMSVMAAVATAFGIQLLAAIGTVLVFGLIADLMNTYLLNLSLLRWYKFKGVAR.

A run of 6 helical transmembrane segments spans residues 19–39, 134–154, 156–176, 187–209, 226–246, and 256–278; these read LVVI…SWYV, LALG…FLMF, VFVP…ISVA, LGTV…LLNN, MRTG…MAAV, and AAIG…LLNL.

Belongs to the SecD/SecF family. SecF subfamily. Part of the protein translocation apparatus. Forms a complex with SecD.

It is found in the cell membrane. Functionally, involved in protein export. This is Protein-export membrane protein SecF from Haloquadratum walsbyi (strain DSM 16790 / HBSQ001).